Consider the following 178-residue polypeptide: Actin-related protein 2/3 complex subunit 3-B (178 aa).

This sequence belongs to the ARPC3 family. As to quaternary structure, component of the Arp2/3 complex composed of actr2/arp2, actr3/arp3, arpc1 (arpc1a or arpc1b), arpc2, arpc3, arpc4 and arpc5.

The protein localises to the cytoplasm. The protein resides in the cytoskeleton. It localises to the cell projection. Its subcellular location is the nucleus. Component of the Arp2/3 complex, a multiprotein complex that mediates actin polymerization upon stimulation by nucleation-promoting factor (NPF). The Arp2/3 complex mediates the formation of branched actin networks in the cytoplasm, providing the force for cell motility. In addition to its role in the cytoplasmic cytoskeleton, the Arp2/3 complex also promotes actin polymerization in the nucleus, thereby regulating gene transcription and repair of damaged DNA. The Arp2/3 complex promotes homologous recombination (HR) repair in response to DNA damage by promoting nuclear actin polymerization, leading to drive motility of double-strand breaks (DSBs). In Xenopus laevis (African clawed frog), this protein is Actin-related protein 2/3 complex subunit 3-B (arpc3-b).